The chain runs to 336 residues: UDP-N-acetylmuramoylpentapeptide-lysine N(6)-alanyltransferase (336 aa).

Residues 37–40 (KNNW), Y104, R212, Y216, and Y257 each bind substrate.

This sequence belongs to the FemABX family.

It carries out the reaction UDP-N-acetyl-alpha-D-muramoyl-L-alanyl-gamma-D-glutamyl-L-lysyl-D-alanyl-D-alanine + L-alanyl-tRNA(Ala) = UDP-N-acetyl-alpha-D-muramoyl-L-alanyl-gamma-D-glutamyl-N(6)-(L-alanyl)-L-lysyl-D-alanyl-D-alanine + tRNA(Ala) + H(+). Its function is as follows. Involved in the synthesis of the bacterial cell wall. Catalyzes the addition of alanine into the interchain peptide bridge of peptidoglycan precursor using aminoacyl-tRNA(Ala) as amino acid donor. This alanine is added to the epsilon-amino group of the L-lysine of the peptidoglycan UDP-N-acetyl-alpha-D-muramoyl-L-alanyl-D-glutamyl-L-lysyl-D-alanyl-D-alanine, in a ribosome-independent mechanism. Specific for UDP-N-acetyl-muramoyl-pentapeptide. Has no activity toward UDP-N-acetyl-muramoyl-tetrapeptide or UDP-N-acetyl-muramoyl-tripeptide. Also acts on L-seryl-tRNA(Ser). The protein is UDP-N-acetylmuramoylpentapeptide-lysine N(6)-alanyltransferase of Weissella viridescens (Lactobacillus viridescens).